The following is a 261-amino-acid chain: Phosphatidylglycerol--prolipoprotein diacylglyceryl transferase (261 aa).

Helical transmembrane passes span 13–33, 50–70, 86–106, and 112–132; these read LQIR…YWYI, VISW…ILFY, WNGG…MYIF, and IDVL…IFFG. Position 133 (arginine 133) interacts with a 1,2-diacyl-sn-glycero-3-phospho-(1'-sn-glycerol). 3 helical membrane-spanning segments follow: residues 169–189, 197–217, and 232–252; these read LYEA…LFFF, GMLS…IEFV, and ITMG…FIKL.

This sequence belongs to the Lgt family.

It is found in the cell inner membrane. It carries out the reaction L-cysteinyl-[prolipoprotein] + a 1,2-diacyl-sn-glycero-3-phospho-(1'-sn-glycerol) = an S-1,2-diacyl-sn-glyceryl-L-cysteinyl-[prolipoprotein] + sn-glycerol 1-phosphate + H(+). It functions in the pathway protein modification; lipoprotein biosynthesis (diacylglyceryl transfer). Its function is as follows. Catalyzes the transfer of the diacylglyceryl group from phosphatidylglycerol to the sulfhydryl group of the N-terminal cysteine of a prolipoprotein, the first step in the formation of mature lipoproteins. This chain is Phosphatidylglycerol--prolipoprotein diacylglyceryl transferase, found in Ehrlichia canis (strain Jake).